A 464-amino-acid chain; its full sequence is Kynureninase (464 aa).

The residue at position 1 (M1) is an N-acetylmethionine. Pyridoxal 5'-phosphate contacts are provided by residues L137, T138, F165–D168, S221, D250, H253, and Y275. Residue K276 is modified to N6-(pyridoxal phosphate)lysine. Residues W305 and N333 each contribute to the pyridoxal 5'-phosphate site.

The protein belongs to the kynureninase family. Homodimer. Requires pyridoxal 5'-phosphate as cofactor.

It is found in the cytoplasm. Its subcellular location is the cytosol. The catalysed reaction is L-kynurenine + H2O = anthranilate + L-alanine + H(+). It catalyses the reaction 3-hydroxy-L-kynurenine + H2O = 3-hydroxyanthranilate + L-alanine + H(+). Its pathway is amino-acid degradation; L-kynurenine degradation; L-alanine and anthranilate from L-kynurenine: step 1/1. It participates in cofactor biosynthesis; NAD(+) biosynthesis; quinolinate from L-kynurenine: step 2/3. Its function is as follows. Catalyzes the cleavage of L-kynurenine (L-Kyn) and L-3-hydroxykynurenine (L-3OHKyn) into anthranilic acid (AA) and 3-hydroxyanthranilic acid (3-OHAA), respectively. Has a preference for the L-3-hydroxy form. Also has cysteine-conjugate-beta-lyase activity. This is Kynureninase (Kynu) from Mus musculus (Mouse).